We begin with the raw amino-acid sequence, 158 residues long: Phosphopantetheine adenylyltransferase (158 aa).

Threonine 10 is a binding site for substrate. ATP is bound by residues 10–11 and histidine 18; that span reads TF. 3 residues coordinate substrate: lysine 42, leucine 74, and arginine 88. Residues 89 to 91, glutamate 99, and 124 to 130 each bind ATP; these read GLR and NSFISST.

This sequence belongs to the bacterial CoaD family. Homohexamer. Mg(2+) is required as a cofactor.

The protein localises to the cytoplasm. The catalysed reaction is (R)-4'-phosphopantetheine + ATP + H(+) = 3'-dephospho-CoA + diphosphate. It participates in cofactor biosynthesis; coenzyme A biosynthesis; CoA from (R)-pantothenate: step 4/5. Reversibly transfers an adenylyl group from ATP to 4'-phosphopantetheine, yielding dephospho-CoA (dPCoA) and pyrophosphate. In Shewanella woodyi (strain ATCC 51908 / MS32), this protein is Phosphopantetheine adenylyltransferase.